Reading from the N-terminus, the 116-residue chain is Protein SPIRAL1-like 1 (116 aa).

The segment covering 1-12 (MSRGGSAGGGQS) has biased composition (gly residues). The segment at 1–116 (MSRGGSAGGG…SSLGYLFGGN (116 aa)) is disordered. Residues 27 to 43 (AAKPAPAAAPAPAPAPA) show a composition bias toward pro residues. A compositionally biased stretch (low complexity) spans 44–60 (PAAAVAAPAEKPSPAKA). Over residues 72–90 (GSRSNNNYHRADGQNTGNF) the composition is skewed to polar residues. Residues 103 to 116 (PGGGSSLGYLFGGN) show a composition bias toward gly residues.

The protein belongs to the SPIRAL1 family.

Its function is as follows. Acts in maintaining the cortical microtubules organization essential for anisotropic cell growth. In Oryza sativa subsp. japonica (Rice), this protein is Protein SPIRAL1-like 1.